Consider the following 361-residue polypeptide: Peptide chain release factor 1 (361 aa).

An N5-methylglutamine modification is found at Q237. The tract at residues A283–Q307 is disordered.

The protein belongs to the prokaryotic/mitochondrial release factor family. Post-translationally, methylated by PrmC. Methylation increases the termination efficiency of RF1.

It localises to the cytoplasm. Peptide chain release factor 1 directs the termination of translation in response to the peptide chain termination codons UAG and UAA. This is Peptide chain release factor 1 from Vesicomyosocius okutanii subsp. Calyptogena okutanii (strain HA).